We begin with the raw amino-acid sequence, 320 residues long: Short-chain dehydrogenase TIC 32 A, chloroplastic (320 aa).

NADP(+)-binding positions include 40 to 46, 92 to 93, N119, and T140; these read GGTSGIG and DL. S174 contributes to the substrate binding site. Y196 acts as the Proton acceptor in catalysis. An interaction with calmodulin region spans residues 301-317; sequence DTTLADKLWDFSIKLVE.

The protein belongs to the short-chain dehydrogenases/reductases (SDR) family. As to quaternary structure, part of the Tic complex. In terms of tissue distribution, expressed in the dehiscence zone of developing pods.

The protein localises to the plastid. Its subcellular location is the chloroplast inner membrane. Functionally, involved in protein precursor import into chloroplasts. Maybe involved in pod abscission or dehiscence (pod shatter). The chain is Short-chain dehydrogenase TIC 32 A, chloroplastic from Brassica napus (Rape).